An 853-amino-acid polypeptide reads, in one-letter code: DNA mismatch repair protein MutS (853 aa).

614–621 (GPNMGGKS) is a binding site for ATP.

It belongs to the DNA mismatch repair MutS family.

Its function is as follows. This protein is involved in the repair of mismatches in DNA. It is possible that it carries out the mismatch recognition step. This protein has a weak ATPase activity. This is DNA mismatch repair protein MutS from Escherichia coli O7:K1 (strain IAI39 / ExPEC).